Reading from the N-terminus, the 259-residue chain is NAD kinase (259 aa).

Residue D43 is the Proton acceptor of the active site. NAD(+)-binding positions include D43–G44, N111–E112, and R136.

This sequence belongs to the NAD kinase family. The cofactor is a divalent metal cation.

The protein resides in the cytoplasm. The catalysed reaction is NAD(+) + ATP = ADP + NADP(+) + H(+). Functionally, involved in the regulation of the intracellular balance of NAD and NADP, and is a key enzyme in the biosynthesis of NADP. Catalyzes specifically the phosphorylation on 2'-hydroxyl of the adenosine moiety of NAD to yield NADP. The polypeptide is NAD kinase (Mycoplasma pneumoniae (strain ATCC 29342 / M129 / Subtype 1) (Mycoplasmoides pneumoniae)).